We begin with the raw amino-acid sequence, 504 residues long: Endochitinase (504 aa).

A signal peptide spans 1-22 (MNRTTLILFFIILSNTITVIHG). The region spanning 23–392 (YVRGCYYTNW…NAISSELEGE (370 aa)) is the GH18 domain. C27 and C52 form a disulfide bridge. Chitin contacts are provided by residues 78-79 (TE) and 105-108 (GGYN). The Proton donor role is filled by E148. Chitin is bound by residues Y149, 212–215 (MSYD), and W362. The segment at 389 to 450 (LEGESENPEI…YDTDETEGQE (62 aa)) is disordered. Residues 396–408 (PEITTEEPSITET) show a composition bias toward low complexity. Repeat copies occupy residues 407-420 (ETEA…EETS) and 421-434 (ETEA…EETS). The 3 X 14 AA approximate tandem repeats of E-T-E-A-Y-[ED]-T-D-E-T-E-E-T-S stretch occupies residues 407–448 (ETEAYETDETEETSETEAYDTDETEETSETEATTYDTDETEG). A compositionally biased stretch (acidic residues) spans 409–435 (EAYETDETEETSETEAYDTDETEETSE). The 3; approximate repeat unit spans residues 435 to 448 (ETEATTYDTDETEG). The Chitin-binding type-2 domain maps to 448–504 (GQECPERDGLFPHPTDCHLFIQCANNIAYVMQCPATTFFNDAIKVCDHMTNAPDTCI). A disulfide bridge connects residues C480 and C493.

It belongs to the glycosyl hydrolase 18 family. Chitinase class II subfamily. Post-translationally, O-glycosylated.

The enzyme catalyses Random endo-hydrolysis of N-acetyl-beta-D-glucosaminide (1-&gt;4)-beta-linkages in chitin and chitodextrins.. In terms of biological role, microfilarial chitinase, which may function to degrade chitin-containing structures in the micro-filaria or in its mosquito vector during parasite development and transmission. The protein is Endochitinase of Brugia malayi (Filarial nematode worm).